The sequence spans 330 residues: tRNA U34 carboxymethyltransferase (330 aa).

Residues Lys91, Trp105, Lys110, Gly130, 152 to 154 (DPS), 181 to 182 (IE), Met196, Tyr200, and Arg315 each bind carboxy-S-adenosyl-L-methionine.

It belongs to the class I-like SAM-binding methyltransferase superfamily. CmoB family. Homotetramer.

It catalyses the reaction carboxy-S-adenosyl-L-methionine + 5-hydroxyuridine(34) in tRNA = 5-carboxymethoxyuridine(34) in tRNA + S-adenosyl-L-homocysteine + H(+). Functionally, catalyzes carboxymethyl transfer from carboxy-S-adenosyl-L-methionine (Cx-SAM) to 5-hydroxyuridine (ho5U) to form 5-carboxymethoxyuridine (cmo5U) at position 34 in tRNAs. The chain is tRNA U34 carboxymethyltransferase from Shewanella piezotolerans (strain WP3 / JCM 13877).